Here is a 249-residue protein sequence, read N- to C-terminus: Derlin-2 (249 aa).

The Cytoplasmic portion of the chain corresponds to 1-21; the sequence is MAQAVEEWYRQMPIITRSYLT. Residues 22 to 42 form a helical membrane-spanning segment; that stretch reads AAVVTTVGCTLEIISPYHLYL. The Lumenal portion of the chain corresponds to 43-96; the sequence is NPKLVVQHYEIWRLVTNFLYFRKMDLDFLFHMFFLARYCKLLEENSFRGRTADF. The helical transmembrane segment at 97–117 threads the bilayer; that stretch reads FYMLLFGATVLTGIVLIGGMI. Residues 118-122 are Cytoplasmic-facing; that stretch reads PYISE. A helical membrane pass occupies residues 123 to 143; sequence TFARILFLSNSLTFMMVYVWS. Residues 144-152 lie on the Lumenal side of the membrane; sequence KHNPFIHMS. Residues 153 to 173 traverse the membrane as a helical segment; it reads FLGLFTFTAAYLPWVLLGFSI. The Cytoplasmic portion of the chain corresponds to 174 to 249; it reads LVGSSTWVDL…GAMGADPQAQ (76 aa).

It belongs to the derlin family.

It is found in the endoplasmic reticulum membrane. Its function is as follows. May be involved in the degradation process of specific misfolded endoplasmic reticulum (ER) luminal proteins. The chain is Derlin-2 (DER2) from Oryza sativa subsp. japonica (Rice).